A 407-amino-acid polypeptide reads, in one-letter code: Methylthioribose kinase (407 aa).

ATP-binding positions include Asn-40, Lys-57, and 111-113; that span reads EDL. Asp-229 serves as a coordination point for substrate. ATP is bound at residue 246 to 248; it reads DAE. Arg-344 serves as a coordination point for substrate.

It belongs to the methylthioribose kinase family. In terms of assembly, homodimer.

It carries out the reaction 5-(methylsulfanyl)-D-ribose + ATP = 5-(methylsulfanyl)-alpha-D-ribose 1-phosphate + ADP + H(+). It participates in amino-acid biosynthesis; L-methionine biosynthesis via salvage pathway; S-methyl-5-thio-alpha-D-ribose 1-phosphate from S-methyl-5'-thioadenosine (hydrolase route): step 2/2. Functionally, catalyzes the phosphorylation of methylthioribose into methylthioribose-1-phosphate. The protein is Methylthioribose kinase of Yersinia pseudotuberculosis serotype O:1b (strain IP 31758).